The chain runs to 424 residues: Serine--tRNA ligase (424 aa).

231–233 (TAE) serves as a coordination point for L-serine. 262–264 (RAE) is an ATP binding site. Glu285 lines the L-serine pocket. 349–352 (EISS) is an ATP binding site. Position 385 (Ser385) interacts with L-serine.

It belongs to the class-II aminoacyl-tRNA synthetase family. Type-1 seryl-tRNA synthetase subfamily. Homodimer. The tRNA molecule binds across the dimer.

The protein localises to the cytoplasm. The enzyme catalyses tRNA(Ser) + L-serine + ATP = L-seryl-tRNA(Ser) + AMP + diphosphate + H(+). It carries out the reaction tRNA(Sec) + L-serine + ATP = L-seryl-tRNA(Sec) + AMP + diphosphate + H(+). It functions in the pathway aminoacyl-tRNA biosynthesis; selenocysteinyl-tRNA(Sec) biosynthesis; L-seryl-tRNA(Sec) from L-serine and tRNA(Sec): step 1/1. Catalyzes the attachment of serine to tRNA(Ser). Is also able to aminoacylate tRNA(Sec) with serine, to form the misacylated tRNA L-seryl-tRNA(Sec), which will be further converted into selenocysteinyl-tRNA(Sec). This is Serine--tRNA ligase from Geobacillus thermodenitrificans (strain NG80-2).